The sequence spans 69 residues: DNA-directed RNA polymerase subunit omega (69 aa).

This sequence belongs to the RNA polymerase subunit omega family. As to quaternary structure, the RNAP catalytic core consists of 2 alpha, 1 beta, 1 beta' and 1 omega subunit. When a sigma factor is associated with the core the holoenzyme is formed, which can initiate transcription.

The enzyme catalyses RNA(n) + a ribonucleoside 5'-triphosphate = RNA(n+1) + diphosphate. Functionally, promotes RNA polymerase assembly. Latches the N- and C-terminal regions of the beta' subunit thereby facilitating its interaction with the beta and alpha subunits. The chain is DNA-directed RNA polymerase subunit omega from Geobacter metallireducens (strain ATCC 53774 / DSM 7210 / GS-15).